The chain runs to 259 residues: Phosphatidylglycerol--prolipoprotein diacylglyceryl transferase (259 aa).

The next 4 membrane-spanning stretches (helical) occupy residues Leu12–Ala32, Ile41–Ala61, Ile80–Val100, and Val109–Ile129. A 1,2-diacyl-sn-glycero-3-phospho-(1'-sn-glycerol) is bound at residue Arg131. The next 3 membrane-spanning stretches (helical) occupy residues Ile167–Trp187, Leu194–Ile214, and Gly226–Ile246.

It belongs to the Lgt family.

It is found in the cell membrane. It catalyses the reaction L-cysteinyl-[prolipoprotein] + a 1,2-diacyl-sn-glycero-3-phospho-(1'-sn-glycerol) = an S-1,2-diacyl-sn-glyceryl-L-cysteinyl-[prolipoprotein] + sn-glycerol 1-phosphate + H(+). It participates in protein modification; lipoprotein biosynthesis (diacylglyceryl transfer). In terms of biological role, catalyzes the transfer of the diacylglyceryl group from phosphatidylglycerol to the sulfhydryl group of the N-terminal cysteine of a prolipoprotein, the first step in the formation of mature lipoproteins. This chain is Phosphatidylglycerol--prolipoprotein diacylglyceryl transferase, found in Streptococcus pyogenes serotype M49 (strain NZ131).